A 236-amino-acid polypeptide reads, in one-letter code: MVLSGRGMLDGGADDVGLWLGMQDFLVFCESAMYATCPLCGLFSDSPKEGRSGGGGGSEGQRTDSRLQLPTTSIVDSPGKRSLCVRASDGAGERDAGRAAAAPVRERLWLLRLCQHPRPLLQVLPRQPPPDRDVPGAVVIVVHGASRRGTVPEGIPVDEGAMPPPPPPRAKTKSRCAACGRRVGLMGFECRCGAVFCGAHPLLGQARLWLRLQGRAGRDAIARANPVVSADKVDKL.

Disordered regions lie at residues 48 to 81 and 150 to 173; these read KEGRSGGGGGSEGQRTDSRLQLPTTSIVDSPGKR and TVPEGIPVDEGAMPPPPPPRAKTK. Polar residues predominate over residues 66–75; that stretch reads RLQLPTTSIV. The AN1-type; degenerate zinc-finger motif lies at 170–216; the sequence is AKTKSRCAACGRRVGLMGFECRCGAVFCGAHPLLGQARLWLRLQGRA. Zn(2+) contacts are provided by Cys176, Cys179, Cys197, and His200.

In terms of biological role, may be involved in environmental stress response. This chain is Zinc finger AN1 domain-containing stress-associated protein 13 (SAP13), found in Oryza sativa subsp. japonica (Rice).